The sequence spans 614 residues: 1-deoxy-D-xylulose-5-phosphate synthase (614 aa).

Thiamine diphosphate is bound by residues H74 and 115–117; that span reads AHS. Residue D146 participates in Mg(2+) binding. Residues 147–148, N175, Y282, and E363 each bind thiamine diphosphate; that span reads GA. N175 contributes to the Mg(2+) binding site.

This sequence belongs to the transketolase family. DXPS subfamily. Homodimer. Requires Mg(2+) as cofactor. Thiamine diphosphate is required as a cofactor.

It carries out the reaction D-glyceraldehyde 3-phosphate + pyruvate + H(+) = 1-deoxy-D-xylulose 5-phosphate + CO2. It participates in metabolic intermediate biosynthesis; 1-deoxy-D-xylulose 5-phosphate biosynthesis; 1-deoxy-D-xylulose 5-phosphate from D-glyceraldehyde 3-phosphate and pyruvate: step 1/1. Functionally, catalyzes the acyloin condensation reaction between C atoms 2 and 3 of pyruvate and glyceraldehyde 3-phosphate to yield 1-deoxy-D-xylulose-5-phosphate (DXP). This is 1-deoxy-D-xylulose-5-phosphate synthase from Nitrosospira multiformis (strain ATCC 25196 / NCIMB 11849 / C 71).